A 165-amino-acid chain; its full sequence is Ribosome maturation factor RimM (165 aa).

The PRC barrel domain maps to 90–161; it reads EDEYFIVDLV…LITIRPSGEW (72 aa).

This sequence belongs to the RimM family. As to quaternary structure, binds ribosomal protein uS19.

It is found in the cytoplasm. Functionally, an accessory protein needed during the final step in the assembly of 30S ribosomal subunit, possibly for assembly of the head region. Essential for efficient processing of 16S rRNA. May be needed both before and after RbfA during the maturation of 16S rRNA. It has affinity for free ribosomal 30S subunits but not for 70S ribosomes. The chain is Ribosome maturation factor RimM from Clostridium perfringens (strain SM101 / Type A).